Reading from the N-terminus, the 633-residue chain is MELRTKTLNIQPPKKPFSNTYQAFVLEKKNALGKNFDNKKVQADYNKLSNNEKERLQKLVDNAEEKYKEELFHYNNHIQGKGKQKYVPQVKVPEKPKKPIGSFFRFLEENRQKYAAKHKDLTNAKILKIMSEDFNNLPQKEVKVYEDAYQKEYAQYLVEFKKWNEKYGQAAQKKQTKRKNSTSKSRRSSSKGKSSVSKGRTKSTSSKRRADSSASQGRSQSSSSNRRKASSSKDQKGTRSSSRKASNSKGRKNSTSNKRNSSSSSKRSSSSKNKKSSSSKNKKSSSSKGRKSSSSRGRKASSSKNRKSSKSKDRKSSSSKGRKSSSSSKSNKRKASSSRGRKSSSSKGRKSSKSQERKNSHADTSKQMEDEGQKRRQSSSSAKRDESSKKSRRNSMKEARTKKANNKSASKASKSGSKSKGKSASKSKGKSSSKGKNSKSRSASKPKSNAAQNSNNTHQTADSSENASSTTQTRTRGRQREQKDMVNEKSNSKSSSKGKKNSKSNTRSKSKSKSASKSRKNASKSKKDTTNHGRQTRSKSRSESKSKSEAPNKNSNKMEVIEQPKEESSDRKRRESRSQSAKKTSDKKSKNRSDSKKMTAEDPKKNNAEDSKGKKKSKEGKTGAYGKKANKKQ.

2 DNA-binding regions (HMG box) span residues 12 to 74 (PPKK…LFHY) and 96 to 164 (PKKP…KKWN). The disordered stretch occupies residues 170–633 (AAQKKQTKRK…AYGKKANKKQ (464 aa)). The span at 174 to 190 (KQTKRKNSTSKSRRSSS) shows a compositional bias: basic residues. Composition is skewed to low complexity over residues 212–224 (SSAS…SSSS) and 253–271 (NSTS…SSSS). 2 stretches are compositionally biased toward basic residues: residues 272–309 (KNKK…RKSS) and 330–352 (SNKR…RKSS). Composition is skewed to basic and acidic residues over residues 353–374 (KSQE…EGQK) and 382–401 (AKRD…EART). Positions 406–416 (NKSASKASKSG) are enriched in low complexity. Residues 417–444 (SKSKGKSASKSKGKSSSKGKNSKSRSAS) are compositionally biased toward basic residues. Positions 446–469 (PKSNAAQNSNNTHQTADSSENASS) are enriched in polar residues. A compositionally biased stretch (basic and acidic residues) spans 478-491 (RQREQKDMVNEKSN). Over residues 496–524 (SKGKKNSKSNTRSKSKSKSASKSRKNASK) the composition is skewed to basic residues. Basic and acidic residues-rich tracts occupy residues 540–550 (SRSESKSKSEA) and 559–612 (EVIE…EDSK).

In terms of processing, all four histones are processed from the precursor molecule. Post-translationally, phosphorylated in growing and dividing cells but not in nongrowing (starved) cells. The N-terminus of MIC LH-alpha and MIC LH-delta is blocked.

The protein resides in the nucleus. The protein localises to the chromosome. This Tetrahymena thermophila (strain SB210) protein is Micronuclear linker histone polyprotein (MLH).